We begin with the raw amino-acid sequence, 458 residues long: Bifunctional protein GlmU (458 aa).

The segment at 1–230 (MLQVDVVILA…DWEVSGVNDK (230 aa)) is pyrophosphorylase. Residues 9–12 (LAAG), Lys23, Gln75, and 80–81 (GT) each bind UDP-N-acetyl-alpha-D-glucosamine. Asp104 provides a ligand contact to Mg(2+). UDP-N-acetyl-alpha-D-glucosamine contacts are provided by Gly139, Glu155, Asn170, and Asn228. Position 228 (Asn228) interacts with Mg(2+). The interval 231–251 (IQLSILERAHQQDTANRLMEQ) is linker. Residues 252-458 (GVMFADPARF…NWKRPRKDRN (207 aa)) form an N-acetyltransferase region. UDP-N-acetyl-alpha-D-glucosamine is bound by residues Arg334 and Lys352. Catalysis depends on His364, which acts as the Proton acceptor. The UDP-N-acetyl-alpha-D-glucosamine site is built by Tyr367 and Asn378. Acetyl-CoA-binding positions include Ala381, 387 to 388 (NY), Ser406, Ala424, and Arg441.

The protein in the N-terminal section; belongs to the N-acetylglucosamine-1-phosphate uridyltransferase family. In the C-terminal section; belongs to the transferase hexapeptide repeat family. In terms of assembly, homotrimer. The cofactor is Mg(2+).

It localises to the cytoplasm. The catalysed reaction is alpha-D-glucosamine 1-phosphate + acetyl-CoA = N-acetyl-alpha-D-glucosamine 1-phosphate + CoA + H(+). The enzyme catalyses N-acetyl-alpha-D-glucosamine 1-phosphate + UTP + H(+) = UDP-N-acetyl-alpha-D-glucosamine + diphosphate. The protein operates within nucleotide-sugar biosynthesis; UDP-N-acetyl-alpha-D-glucosamine biosynthesis; N-acetyl-alpha-D-glucosamine 1-phosphate from alpha-D-glucosamine 6-phosphate (route II): step 2/2. Its pathway is nucleotide-sugar biosynthesis; UDP-N-acetyl-alpha-D-glucosamine biosynthesis; UDP-N-acetyl-alpha-D-glucosamine from N-acetyl-alpha-D-glucosamine 1-phosphate: step 1/1. It participates in bacterial outer membrane biogenesis; LPS lipid A biosynthesis. Functionally, catalyzes the last two sequential reactions in the de novo biosynthetic pathway for UDP-N-acetylglucosamine (UDP-GlcNAc). The C-terminal domain catalyzes the transfer of acetyl group from acetyl coenzyme A to glucosamine-1-phosphate (GlcN-1-P) to produce N-acetylglucosamine-1-phosphate (GlcNAc-1-P), which is converted into UDP-GlcNAc by the transfer of uridine 5-monophosphate (from uridine 5-triphosphate), a reaction catalyzed by the N-terminal domain. This Nitrosomonas europaea (strain ATCC 19718 / CIP 103999 / KCTC 2705 / NBRC 14298) protein is Bifunctional protein GlmU.